The primary structure comprises 144 residues: D-aminoacyl-tRNA deacylase (144 aa).

Residues 136-137 (GP) carry the Gly-cisPro motif, important for rejection of L-amino acids motif.

The protein belongs to the DTD family. As to quaternary structure, homodimer.

The protein localises to the cytoplasm. It catalyses the reaction glycyl-tRNA(Ala) + H2O = tRNA(Ala) + glycine + H(+). The catalysed reaction is a D-aminoacyl-tRNA + H2O = a tRNA + a D-alpha-amino acid + H(+). Functionally, an aminoacyl-tRNA editing enzyme that deacylates mischarged D-aminoacyl-tRNAs. Also deacylates mischarged glycyl-tRNA(Ala), protecting cells against glycine mischarging by AlaRS. Acts via tRNA-based rather than protein-based catalysis; rejects L-amino acids rather than detecting D-amino acids in the active site. By recycling D-aminoacyl-tRNA to D-amino acids and free tRNA molecules, this enzyme counteracts the toxicity associated with the formation of D-aminoacyl-tRNA entities in vivo and helps enforce protein L-homochirality. The polypeptide is D-aminoacyl-tRNA deacylase (Aliivibrio fischeri (strain MJ11) (Vibrio fischeri)).